We begin with the raw amino-acid sequence, 446 residues long: CBL-interacting serine/threonine-protein kinase 24 (446 aa).

One can recognise a Protein kinase domain in the interval 11-264 (YEVGRTIGEG…IQGIKKDPWF (254 aa)). Residues 17 to 25 (IGEGTFAKV) and K40 contribute to the ATP site. D134 functions as the Proton acceptor in the catalytic mechanism. Positions 152-179 (DFGLSALPQEGVELLRTTCGTPNYVAPE) are activation loop. The residue at position 156 (S156) is a Phosphoserine. A Phosphothreonine modification is found at T168. Residues 305 to 329 (EGPLMMNAFEMITLSQGLNLSALFD) enclose the NAF domain. The tract at residues 336–365 (KRQTRFVSRREPSEIIANIEAVANSMGFKS) is PPI.

This sequence belongs to the protein kinase superfamily. CAMK Ser/Thr protein kinase family. SNF1 subfamily. In terms of assembly, interacts with CBL1, CBL2, CBL4/SOS3, CBL5, CBL9, CBL10 and with the protein phosphatase 2C ABI2. Requires Mn(2+) as cofactor. Autophosphorylated.

The protein localises to the cytoplasm. It localises to the nucleus. The catalysed reaction is L-seryl-[protein] + ATP = O-phospho-L-seryl-[protein] + ADP + H(+). It carries out the reaction L-threonyl-[protein] + ATP = O-phospho-L-threonyl-[protein] + ADP + H(+). In terms of biological role, involved in the regulatory pathway for the control of intracellular Na(+) and K(+) homeostasis and salt tolerance. Activates the vacuolar H(+)/Ca(2+) antiporter CAX1 and operates in synergy with CBL4/SOS3 to activate the plasma membrane Na(+)/H(+) antiporter SOS1. CIPK serine-threonine protein kinases interact with CBL proteins. Binding of a CBL protein to the regulatory NAF domain of CIPK protein lead to the activation of the kinase in a calcium-dependent manner. Phosphorylates CBL1, CBL4 and CBL10. This is CBL-interacting serine/threonine-protein kinase 24 (CIPK24) from Arabidopsis thaliana (Mouse-ear cress).